The primary structure comprises 391 residues: S-adenosylmethionine synthase (391 aa).

His-14 contributes to the ATP binding site. Asp-16 provides a ligand contact to Mg(2+). Glu-42 serves as a coordination point for K(+). L-methionine is bound by residues Glu-55 and Gln-98. The flexible loop stretch occupies residues 98–108; the sequence is QSVDIAMGVDE. ATP-binding positions include 172 to 174, 238 to 239, Asp-247, 253 to 254, Ala-270, and Lys-274; these read DGK, RF, and RK. Residue Asp-247 coordinates L-methionine. L-methionine is bound at residue Lys-278.

This sequence belongs to the AdoMet synthase family. Homotetramer; dimer of dimers. Mg(2+) serves as cofactor. The cofactor is K(+).

The protein localises to the cytoplasm. The catalysed reaction is L-methionine + ATP + H2O = S-adenosyl-L-methionine + phosphate + diphosphate. Its pathway is amino-acid biosynthesis; S-adenosyl-L-methionine biosynthesis; S-adenosyl-L-methionine from L-methionine: step 1/1. Its function is as follows. Catalyzes the formation of S-adenosylmethionine (AdoMet) from methionine and ATP. The overall synthetic reaction is composed of two sequential steps, AdoMet formation and the subsequent tripolyphosphate hydrolysis which occurs prior to release of AdoMet from the enzyme. This chain is S-adenosylmethionine synthase, found in Clostridium botulinum (strain Langeland / NCTC 10281 / Type F).